The chain runs to 83 residues: Putative snRNP Sm-like protein (83 aa).

Residues 9–81 (KPMDVLKSAL…VIFVSPSKGD (73 aa)) form the Sm domain.

This sequence belongs to the snRNP Sm proteins family.

In Thermoplasma acidophilum (strain ATCC 25905 / DSM 1728 / JCM 9062 / NBRC 15155 / AMRC-C165), this protein is Putative snRNP Sm-like protein.